A 601-amino-acid polypeptide reads, in one-letter code: Tripeptidyl-peptidase SED4 (601 aa).

Positions methionine 1–alanine 22 are cleaved as a signal peptide. A propeptide spans alanine 23–threonine 202 (removed in mature form). N-linked (GlcNAc...) asparagine glycosylation is found at asparagine 210 and asparagine 281. The 390-residue stretch at threonine 212 to tyrosine 601 folds into the Peptidase S53 domain. Catalysis depends on charge relay system residues glutamate 288 and aspartate 292. Asparagine 323 carries an N-linked (GlcNAc...) asparagine glycan. Catalysis depends on serine 504, which acts as the Charge relay system. Positions 546 and 547 each coordinate Ca(2+). Asparagine 575 carries N-linked (GlcNAc...) asparagine glycosylation. The Ca(2+) site is built by glycine 579 and aspartate 581.

The cofactor is Ca(2+).

It localises to the secreted. The protein resides in the extracellular space. It carries out the reaction Release of an N-terminal tripeptide from a polypeptide.. In terms of biological role, secreted tripeptidyl-peptidase which degrades proteins at acidic pHs and is involved in virulence. This is Tripeptidyl-peptidase SED4 (SED4) from Arthroderma otae (strain ATCC MYA-4605 / CBS 113480) (Microsporum canis).